Reading from the N-terminus, the 511-residue chain is 2-isopropylmalate synthase (511 aa).

Over residues 1-16 (MTRKIDIFDTTLRDGE) the composition is skewed to basic and acidic residues. The interval 1 to 23 (MTRKIDIFDTTLRDGEQSPGASM) is disordered. The Pyruvate carboxyltransferase domain maps to 5-268 (IDIFDTTLRD…HTDVVTQELT (264 aa)). Positions 14, 203, 205, and 239 each coordinate Mn(2+). Residues 392–511 (ALESVQVVCG…IQTTRSKQGK (120 aa)) form a regulatory domain region.

Belongs to the alpha-IPM synthase/homocitrate synthase family. LeuA type 1 subfamily. In terms of assembly, homodimer. It depends on Mn(2+) as a cofactor.

The protein resides in the cytoplasm. It catalyses the reaction 3-methyl-2-oxobutanoate + acetyl-CoA + H2O = (2S)-2-isopropylmalate + CoA + H(+). The protein operates within amino-acid biosynthesis; L-leucine biosynthesis; L-leucine from 3-methyl-2-oxobutanoate: step 1/4. In terms of biological role, catalyzes the condensation of the acetyl group of acetyl-CoA with 3-methyl-2-oxobutanoate (2-ketoisovalerate) to form 3-carboxy-3-hydroxy-4-methylpentanoate (2-isopropylmalate). The protein is 2-isopropylmalate synthase of Olsenella uli (strain ATCC 49627 / DSM 7084 / CCUG 31166 / CIP 109912 / JCM 12494 / LMG 11480 / NCIMB 702895 / VPI D76D-27C) (Lactobacillus uli).